The chain runs to 582 residues: Potassium-transporting ATPase potassium-binding subunit (582 aa).

Helical transmembrane passes span 11 to 31 (AVFF…LAWV), 81 to 101 (LKAV…VLMF), 148 to 168 (FGIG…MPAF), 195 to 215 (LLPI…VQTI), 272 to 292 (VLTL…GAWV), 298 to 318 (GVAI…VAVV), 379 to 399 (ALGA…NGVG), 401 to 421 (GLLN…LMIG), 439 to 459 (VFVV…AAVV), and 551 to 571 (GLLI…ALVF).

It belongs to the KdpA family. As to quaternary structure, the system is composed of three essential subunits: KdpA, KdpB and KdpC.

It is found in the cell membrane. In terms of biological role, part of the high-affinity ATP-driven potassium transport (or Kdp) system, which catalyzes the hydrolysis of ATP coupled with the electrogenic transport of potassium into the cytoplasm. This subunit binds the extracellular potassium ions and delivers the ions to the membrane domain of KdpB through an intramembrane tunnel. This Halobacterium salinarum (strain ATCC 700922 / JCM 11081 / NRC-1) (Halobacterium halobium) protein is Potassium-transporting ATPase potassium-binding subunit.